We begin with the raw amino-acid sequence, 300 residues long: 4-hydroxy-tetrahydrodipicolinate synthase (300 aa).

Residue Thr-45 coordinates pyruvate. The active-site Proton donor/acceptor is Tyr-140. The active-site Schiff-base intermediate with substrate is the Lys-169. Val-210 serves as a coordination point for pyruvate.

Belongs to the DapA family. Homotetramer; dimer of dimers.

It is found in the cytoplasm. It carries out the reaction L-aspartate 4-semialdehyde + pyruvate = (2S,4S)-4-hydroxy-2,3,4,5-tetrahydrodipicolinate + H2O + H(+). It participates in amino-acid biosynthesis; L-lysine biosynthesis via DAP pathway; (S)-tetrahydrodipicolinate from L-aspartate: step 3/4. In terms of biological role, catalyzes the condensation of (S)-aspartate-beta-semialdehyde [(S)-ASA] and pyruvate to 4-hydroxy-tetrahydrodipicolinate (HTPA). The polypeptide is 4-hydroxy-tetrahydrodipicolinate synthase (Helicobacter acinonychis (strain Sheeba)).